The sequence spans 199 residues: Large ribosomal subunit protein uL5 (199 aa).

It belongs to the universal ribosomal protein uL5 family. In terms of assembly, part of the 50S ribosomal subunit; part of the 5S rRNA/L5/L18/L25 subcomplex. Contacts the 5S rRNA and the P site tRNA. Forms a bridge to the 30S subunit in the 70S ribosome.

This is one of the proteins that bind and probably mediate the attachment of the 5S RNA into the large ribosomal subunit, where it forms part of the central protuberance. In the 70S ribosome it contacts protein S13 of the 30S subunit (bridge B1b), connecting the 2 subunits; this bridge is implicated in subunit movement. Contacts the P site tRNA; the 5S rRNA and some of its associated proteins might help stabilize positioning of ribosome-bound tRNAs. The chain is Large ribosomal subunit protein uL5 from Frankia casuarinae (strain DSM 45818 / CECT 9043 / HFP020203 / CcI3).